The sequence spans 469 residues: Mannosyl-oligosaccharide 1,2-alpha-mannosidase IA (469 aa).

Over 1–469 (REPADAAVRE…DQKEVEVKVK (469 aa)) the chain is Lumenal. A disulfide bridge connects residues cysteine 292 and cysteine 324. A glycan (N-linked (GlcNAc...) asparagine) is linked at asparagine 329. Residue glutamate 338 is the Proton donor of the active site. Position 449 (threonine 449) interacts with Ca(2+).

This sequence belongs to the glycosyl hydrolase 47 family. It depends on Ca(2+) as a cofactor.

Its subcellular location is the golgi apparatus membrane. It catalyses the reaction N(4)-(alpha-D-Man-(1-&gt;2)-alpha-D-Man-(1-&gt;2)-alpha-D-Man-(1-&gt;3)-[alpha-D-Man-(1-&gt;2)-alpha-D-Man-(1-&gt;3)-[alpha-D-Man-(1-&gt;2)-alpha-D-Man-(1-&gt;6)]-alpha-D-Man-(1-&gt;6)]-beta-D-Man-(1-&gt;4)-beta-D-GlcNAc-(1-&gt;4)-beta-D-GlcNAc)-L-asparaginyl-[protein] (N-glucan mannose isomer 9A1,2,3B1,2,3) + 4 H2O = N(4)-(alpha-D-Man-(1-&gt;3)-[alpha-D-Man-(1-&gt;3)-[alpha-D-Man-(1-&gt;6)]-alpha-D-Man-(1-&gt;6)]-beta-D-Man-(1-&gt;4)-beta-D-GlcNAc-(1-&gt;4)-beta-D-GlcNAc)-L-asparaginyl-[protein] (N-glucan mannose isomer 5A1,2) + 4 beta-D-mannose. It carries out the reaction N(4)-(alpha-D-Man-(1-&gt;2)-alpha-D-Man-(1-&gt;2)-alpha-D-Man-(1-&gt;3)-[alpha-D-Man-(1-&gt;3)-[alpha-D-Man-(1-&gt;2)-alpha-D-Man-(1-&gt;6)]-alpha-D-Man-(1-&gt;6)]-beta-D-Man-(1-&gt;4)-beta-D-GlcNAc-(1-&gt;4)-beta-D-GlcNAc)-L-asparaginyl-[protein] (N-glucan mannose isomer 8A1,2,3B1,3) + 3 H2O = N(4)-(alpha-D-Man-(1-&gt;3)-[alpha-D-Man-(1-&gt;3)-[alpha-D-Man-(1-&gt;6)]-alpha-D-Man-(1-&gt;6)]-beta-D-Man-(1-&gt;4)-beta-D-GlcNAc-(1-&gt;4)-beta-D-GlcNAc)-L-asparaginyl-[protein] (N-glucan mannose isomer 5A1,2) + 3 beta-D-mannose. It functions in the pathway protein modification; protein glycosylation. Its activity is regulated as follows. Inhibited by both 1-deoxymannojirimycin and kifunensine. Involved in the maturation of Asn-linked oligosaccharides. Progressively trim alpha-1,2-linked mannose residues from Man(9)GlcNAc(2) to produce Man(5)GlcNAc(2). The chain is Mannosyl-oligosaccharide 1,2-alpha-mannosidase IA (MAN1A1) from Oryctolagus cuniculus (Rabbit).